Consider the following 528-residue polypeptide: GMP synthase [glutamine-hydrolyzing] (528 aa).

Positions 13-204 constitute a Glutamine amidotransferase type-1 domain; that stretch reads SILILDFGSQ…VYKISCCTAD (192 aa). Catalysis depends on C90, which acts as the Nucleophile. Residues H178 and E180 contribute to the active site. The GMPS ATP-PPase domain occupies 205–403; that stretch reads WTTETYIEET…LGLPDEIIKR (199 aa). Residue 232-238 participates in ATP binding; sequence SGGVDSS.

Homodimer.

It catalyses the reaction XMP + L-glutamine + ATP + H2O = GMP + L-glutamate + AMP + diphosphate + 2 H(+). Its pathway is purine metabolism; GMP biosynthesis; GMP from XMP (L-Gln route): step 1/1. In terms of biological role, catalyzes the synthesis of GMP from XMP. The polypeptide is GMP synthase [glutamine-hydrolyzing] (Prochlorococcus marinus (strain AS9601)).